We begin with the raw amino-acid sequence, 698 residues long: Pentatricopeptide repeat-containing protein 1, mitochondrial (698 aa).

The disordered stretch occupies residues 49-88; it reads SSSQLPLGQERQENTGSLGSDPSHSNSTATQEEDEEESFG. Residues 62–78 are compositionally biased toward polar residues; it reads NTGSLGSDPSHSNSTAT. PPR repeat units follow at residues 133–169, 170–204, 205–243, 244–278, 279–315, and 316–352; these read TPYW…RLQP, MESN…DLEP, SDAT…NFEL, NLKT…GHVV, TEET…GLQP, and SRDS…ATVL. The tract at residues 392–419 is disordered; the sequence is QALGPPEPPEARVPSKAQPEVDTKAEPS. PPR repeat units follow at residues 517–551, 552–583, and 584–618; these read DLTF…GLVP, NLQT…QVTP, and NSHI…RVPV. The tract at residues 670 to 698 is disordered; it reads HPWQKFRTKPQEDQDTRKEADDGCALGGR. Over residues 678 to 690 the composition is skewed to basic and acidic residues; it reads KPQEDQDTRKEAD.

It belongs to the PTCD1 family. In terms of assembly, associates with mitochondrial leucine tRNAs. Interacts with ELAC2.

It is found in the mitochondrion. It localises to the mitochondrion matrix. Its function is as follows. Mitochondrial protein implicated in negative regulation of leucine tRNA levels, as well as negative regulation of mitochondria-encoded proteins and COX activity. Also affects the 3'-processing of mitochondrial tRNAs. This chain is Pentatricopeptide repeat-containing protein 1, mitochondrial (PTCD1), found in Pongo abelii (Sumatran orangutan).